A 101-amino-acid polypeptide reads, in one-letter code: Urease subunit beta (101 aa).

This sequence belongs to the urease beta subunit family. As to quaternary structure, heterotrimer of UreA (gamma), UreB (beta) and UreC (alpha) subunits. Three heterotrimers associate to form the active enzyme.

It localises to the cytoplasm. The catalysed reaction is urea + 2 H2O + H(+) = hydrogencarbonate + 2 NH4(+). Its pathway is nitrogen metabolism; urea degradation; CO(2) and NH(3) from urea (urease route): step 1/1. The polypeptide is Urease subunit beta (Cereibacter sphaeroides (strain ATCC 17029 / ATH 2.4.9) (Rhodobacter sphaeroides)).